A 198-amino-acid polypeptide reads, in one-letter code: Protein RD3-like (198 aa).

The stretch at 28 to 57 (KTLLRELKWHLKERERLIQEIENEQKVKKT) forms a coiled coil. The tract at residues 133-168 (GSEQEDLEDSGSMDCSAPSVIQGDSSKRADKDEIPT) is disordered. Over residues 157–166 (SSKRADKDEI) the composition is skewed to basic and acidic residues.

The protein is Protein RD3-like (RD3L) of Homo sapiens (Human).